A 322-amino-acid chain; its full sequence is Cytochrome c biogenesis protein CcsA (322 aa).

6 helical membrane passes run 9 to 29 (ILTH…LITL), 44 to 64 (GMIV…ASSG), 143 to 163 (MLLS…ILII), 226 to 246 (VISL…VWAN), 259 to 276 (ETWA…LHSR), and 289 to 309 (IASI…LLGI).

The protein belongs to the CcmF/CycK/Ccl1/NrfE/CcsA family. In terms of assembly, may interact with Ccs1.

It is found in the plastid. It localises to the chloroplast thylakoid membrane. Required during biogenesis of c-type cytochromes (cytochrome c6 and cytochrome f) at the step of heme attachment. This is Cytochrome c biogenesis protein CcsA from Triticum aestivum (Wheat).